The sequence spans 280 residues: Proteasome subunit beta 2 (280 aa).

Residues 1 to 52 (MTERERGQGLPAEFFAVGTASFVELLSRTAPQLLPVNRVRDGSHPMPDIPHG) constitute a propeptide, removed in mature form; by autocatalysis. T53 serves as the catalytic Nucleophile.

Belongs to the peptidase T1B family. In terms of assembly, the 20S proteasome core is composed of 14 alpha and 14 beta subunits that assemble into four stacked heptameric rings, resulting in a barrel-shaped structure. The two inner rings, each composed of seven catalytic beta subunits, are sandwiched by two outer rings, each composed of seven alpha subunits. The catalytic chamber with the active sites is on the inside of the barrel. Has a gated structure, the ends of the cylinder being occluded by the N-termini of the alpha-subunits. Is capped by the proteasome-associated ATPase, ARC.

It localises to the cytoplasm. The catalysed reaction is Cleavage of peptide bonds with very broad specificity.. Its pathway is protein degradation; proteasomal Pup-dependent pathway. With respect to regulation, the formation of the proteasomal ATPase ARC-20S proteasome complex, likely via the docking of the C-termini of ARC into the intersubunit pockets in the alpha-rings, may trigger opening of the gate for substrate entry. Interconversion between the open-gate and close-gate conformations leads to a dynamic regulation of the 20S proteasome proteolysis activity. Its function is as follows. Component of the proteasome core, a large protease complex with broad specificity involved in protein degradation. This chain is Proteasome subunit beta 2, found in Thermomonospora curvata (strain ATCC 19995 / DSM 43183 / JCM 3096 / KCTC 9072 / NBRC 15933 / NCIMB 10081 / Henssen B9).